We begin with the raw amino-acid sequence, 283 residues long: MNAPQNSPEIGREIIAAGIRTNLHDSGAGFPLMMIHGSGPGVTAWANWRLVMPELAKSRRVIAPDMLGFGYSERPADAQYNRDVWVDHAVGVLDALEIEQADLVGNSFGGGIALALAIRHPERVRRLVLMGSAGVSFPITEGLDAVWGYNPSFAEMRRLLDIFAFDRNLVNDELAELRYQASIRPGFHESFAAMFPAPRQRWVDGLASAEAAIRALPHETLVIHGREDQIIPLQTSLTLADWIARAQLHVFGQCGHWTQIEHAARFASLVGDFLAEADAAAIS.

The AB hydrolase-1 domain occupies 32–262 (LMMIHGSGPG…QCGHWTQIEH (231 aa)). Residues S107, D228, and H256 contribute to the active site.

Belongs to the DmpD/TodF/XylF esterase family.

The enzyme catalyses (2Z,4E)-2-hydroxy-6-oxohexa-2,4-dienoate + H2O = 2-oxopent-4-enoate + formate + H(+). It functions in the pathway aromatic compound metabolism; benzoate degradation via hydroxylation. Its function is as follows. Catalyzes the conversion of 2-hydroxymuconate semialdehyde to 2-hydroxypent-2,4-dienoate. This Pseudomonas sp. (strain CF600) protein is 2-hydroxymuconate semialdehyde hydrolase (dmpD).